The primary structure comprises 35 residues: uncharacterized protein (35 aa).

The segment covering 1–27 has biased composition (low complexity); the sequence is MDQNEANIYNENNENNENNENENCQNE. Positions 1–35 are disordered; the sequence is MDQNEANIYNENNENNENNENENCQNEPIRIKIII.

This is an uncharacterized protein from Dictyostelium discoideum (Social amoeba).